A 79-amino-acid polypeptide reads, in one-letter code: Ubiquinol-cytochrome c reductase complex assembly factor 5 (79 aa).

Residues 1–20 are Mitochondrial matrix-facing; that stretch reads MSPYSGSVRRLLDSWPGKKR. A helical membrane pass occupies residues 21-43; sequence FGVYRFLPLFFLLGAGLEFSMIN. Over 44 to 79 the chain is Mitochondrial intermembrane; that stretch reads WTVGETNFYRTFKRRQAKNYVEEQQHLQARAANNTN.

Belongs to the UQCC5 family. Interacts with respiratory complex III components Uqcc1 and RFeSP; the interactions are probably involved in the assembly and stability of the mitochondrial ubiquinol-cytochrome c reductase complex. Interacts with sloth2; the interaction stabilizes both components. Expressed in the brain.

Its subcellular location is the mitochondrion inner membrane. It is found in the mitochondrion. Required for the assembly and stability of the mitochondrial ubiquinol-cytochrome c reductase complex (complex III (CIII) or cytochrome b-c1 complex), a multisubunit transmembrane complex that is part of the mitochondrial electron transport chain (ETC) which drives oxidative phosphorylation. This is Ubiquinol-cytochrome c reductase complex assembly factor 5 from Drosophila melanogaster (Fruit fly).